Reading from the N-terminus, the 233-residue chain is Large ribosomal subunit protein uL1 (233 aa).

It belongs to the universal ribosomal protein uL1 family. Part of the 50S ribosomal subunit.

Binds directly to 23S rRNA. The L1 stalk is quite mobile in the ribosome, and is involved in E site tRNA release. Functionally, protein L1 is also a translational repressor protein, it controls the translation of the L11 operon by binding to its mRNA. This chain is Large ribosomal subunit protein uL1, found in Vibrio campbellii (strain ATCC BAA-1116).